An 832-amino-acid chain; its full sequence is Cadherin-like protein 26 (832 aa).

The first 27 residues, 1–27 (MAMRSGRHPSLLLLLVLLLWLLQVSII), serve as a signal peptide directing secretion. Residues 28–614 (DSVQQETDDL…ELADAEVGLH (587 aa)) lie on the Extracellular side of the membrane. Cadherin domains are found at residues 35–165 (DDLT…APQF), 166–275 (PEKE…RPAF), 276–396 (TQEN…PPAF), and 397–500 (HPQS…VPTL). Residues Asn81, Asn85, Asn171, and Asn177 are each glycosylated (N-linked (GlcNAc...) asparagine). An N-linked (GlcNAc...) asparagine glycan is attached at Asn462. Residues 615–635 (VGALFPVCAAFVALAVALLFL) form a helical membrane-spanning segment. The Cytoplasmic segment spans residues 636 to 832 (LRCYFVLEPK…EIYSESGVPS (197 aa)). Positions 813 to 832 (SLGSKATPFEEIYSESGVPS) are disordered.

In terms of assembly, homodimer. Component of a cadherin:catenin adhesion complex composed of at least of CDH26, beta-catenin/CTNNB1, alpha-catenin/CTNNA1 and p120 catenin/CTNND1. N-glycosylated. Expressed by epithelial cells of gastrointestinal tissue.

It localises to the cell membrane. Functionally, cadherins are calcium-dependent cell adhesion proteins. They preferentially interact with themselves in a homophilic manner in connecting cells; cadherins may thus contribute to the sorting of heterogeneous cell types. Ligand for integrins alpha-E/beta-7, ITGAE:ITGAB7, alpha-4/beta-7, ITGA4:ITGAB7 and alpha-4/beta-1, ITGA4:ITGAB1 through which modulates CD4(+) T cells activation. The sequence is that of Cadherin-like protein 26 (CDH26) from Homo sapiens (Human).